Consider the following 538-residue polypeptide: Thermosome subunit beta (538 aa).

Positions 518 to 538 are disordered; that stretch reads SSGSSEEGMEEMGGMGGMPPM. A compositionally biased stretch (gly residues) spans 528-538; that stretch reads EMGGMGGMPPM.

It belongs to the TCP-1 chaperonin family. In terms of assembly, forms a Heterooligomeric complex of two stacked eight-membered rings.

Its function is as follows. Molecular chaperone; binds unfolded polypeptides in vitro, and has a weak ATPase activity. This Methanothermobacter thermautotrophicus (strain ATCC 29096 / DSM 1053 / JCM 10044 / NBRC 100330 / Delta H) (Methanobacterium thermoautotrophicum) protein is Thermosome subunit beta (thsB).